The primary structure comprises 350 residues: MKTQLEGDRVLAGKEAVAELYKTGYFGRPREDGLELSLVEAAYLQFRGKIEIELEGRKLDFRALFEQASLRQPNFELKYIVYKDLKERGYYVQPSAADFRVYPRGSHPGKSAAKIFVHVLSERQPLPVKLLQDSVISAENVHKQFILAVVDEESDLTFYEIKTASPQGEMPEPYPEVKTDATFLEDRVIAWDAEASGALYAGGFYGKMLDPERLQLSLVESLYLFSRGIIVVRDRKDRIFSFDEFVEKASEIESSFLRKYGAYKALRDSGHVVKTGFKFGTHFRVYRKVESIEKIPHSEYLVNVIPSDYEFRLPVMSGAVRLANSVRKRMLFAVEKEEGVEYLDISRVKM.

Catalysis depends on residues Tyr286, His297, and Lys328.

Belongs to the tRNA-intron endonuclease family. Archaeal long subfamily. Homodimer.

The enzyme catalyses pretRNA = a 3'-half-tRNA molecule with a 5'-OH end + a 5'-half-tRNA molecule with a 2',3'-cyclic phosphate end + an intron with a 2',3'-cyclic phosphate and a 5'-hydroxyl terminus.. Functionally, endonuclease that removes tRNA introns. Cleaves pre-tRNA at the 5'- and 3'-splice sites to release the intron. The products are an intron and two tRNA half-molecules bearing 2',3' cyclic phosphate and 5'-OH termini. Recognizes a pseudosymmetric substrate in which 2 bulged loops of 3 bases are separated by a stem of 4 bp. The protein is tRNA-splicing endonuclease of Methanosarcina acetivorans (strain ATCC 35395 / DSM 2834 / JCM 12185 / C2A).